Consider the following 259-residue polypeptide: Acyl-[acyl-carrier-protein]--UDP-N-acetylglucosamine O-acyltransferase (259 aa).

The protein belongs to the transferase hexapeptide repeat family. LpxA subfamily. Homotrimer.

It is found in the cytoplasm. It catalyses the reaction a (3R)-hydroxyacyl-[ACP] + UDP-N-acetyl-alpha-D-glucosamine = a UDP-3-O-[(3R)-3-hydroxyacyl]-N-acetyl-alpha-D-glucosamine + holo-[ACP]. The protein operates within glycolipid biosynthesis; lipid IV(A) biosynthesis; lipid IV(A) from (3R)-3-hydroxytetradecanoyl-[acyl-carrier-protein] and UDP-N-acetyl-alpha-D-glucosamine: step 1/6. Functionally, involved in the biosynthesis of lipid A, a phosphorylated glycolipid that anchors the lipopolysaccharide to the outer membrane of the cell. This is Acyl-[acyl-carrier-protein]--UDP-N-acetylglucosamine O-acyltransferase from Psychrobacter cryohalolentis (strain ATCC BAA-1226 / DSM 17306 / VKM B-2378 / K5).